Reading from the N-terminus, the 233-residue chain is Large ribosomal subunit protein uL1 (233 aa).

It belongs to the universal ribosomal protein uL1 family. In terms of assembly, part of the 50S ribosomal subunit.

Binds directly to 23S rRNA. The L1 stalk is quite mobile in the ribosome, and is involved in E site tRNA release. Its function is as follows. Protein L1 is also a translational repressor protein, it controls the translation of the L11 operon by binding to its mRNA. The polypeptide is Large ribosomal subunit protein uL1 (Polynucleobacter necessarius subsp. necessarius (strain STIR1)).